A 289-amino-acid chain; its full sequence is MALSSNWQALLASESNPTSNGKNKQSNRKIRNVKKVSKTVNVSSTTQYAPRKRKNGSKIMDMVYNMNKEISKHEKDKLEGKVFEFNPNKANTSTTIKEPVKVGISEDTRINSNKSKEIGKYIAMDCEFVGVGPEGKESALARISIVNYFGHVVLDEFVKPREKVVEWRTWVSGIKPEHMKNAITFKEAQKKTADILEGRILVGHALKHDLEALMLSHPKSLLRDTSRHLPFRKLYAKGKTPSLKKLTREVLKISIQEGEHSSVEDARATMLLYKKEKTEFEKIHRNTFN.

Residues 1-24 are compositionally biased toward polar residues; that stretch reads MALSSNWQALLASESNPTSNGKNK. The disordered stretch occupies residues 1–34; it reads MALSSNWQALLASESNPTSNGKNKQSNRKIRNVK. The segment covering 25 to 34 has biased composition (basic residues); sequence QSNRKIRNVK. The region spanning 121–273 is the Exonuclease domain; the sequence is YIAMDCEFVG…EDARATMLLY (153 aa).

This sequence belongs to the REXO4 family.

The protein resides in the nucleus. In terms of biological role, exoribonuclease involved in ribosome biosynthesis. Involved in the processing of ITS1, the internal transcribed spacer localized between the 18S and 5.8S rRNAs. This is RNA exonuclease 4 (REX4) from Saccharomyces cerevisiae (strain ATCC 204508 / S288c) (Baker's yeast).